Consider the following 154-residue polypeptide: Superoxide dismutase [Cu-Zn] (154 aa).

The Cu cation site is built by His-47, His-49, and His-64. A disulfide bridge links Cys-58 with Cys-147. Residues His-64, His-72, His-81, and Asp-84 each contribute to the Zn(2+) site. Cu cation is bound at residue His-121. Over residues 125 to 137 the composition is skewed to basic and acidic residues; the sequence is DDLGRGGNEESKK. Positions 125–147 are disordered; it reads DDLGRGGNEESKKTGNAGPRPAC. Residue Arg-144 participates in substrate binding.

It belongs to the Cu-Zn superoxide dismutase family. In terms of assembly, homodimer. Cu cation is required as a cofactor. The cofactor is Zn(2+).

The protein resides in the cytoplasm. The enzyme catalyses 2 superoxide + 2 H(+) = H2O2 + O2. Functionally, destroys radicals which are normally produced within the cells and which are toxic to biological systems. This is Superoxide dismutase [Cu-Zn] from Aspergillus niger (strain ATCC MYA-4892 / CBS 513.88 / FGSC A1513).